A 214-amino-acid polypeptide reads, in one-letter code: Outer-membrane lipoprotein LolB (214 aa).

An N-terminal signal peptide occupies residues 1-25 (MNNLKRFTKSIFSCIALSGLLFLGG). C26 is lipidated: N-palmitoyl cysteine. Residue C26 is the site of S-diacylglycerol cysteine attachment.

It belongs to the LolB family. Monomer.

The protein resides in the cell outer membrane. In terms of biological role, plays a critical role in the incorporation of lipoproteins in the outer membrane after they are released by the LolA protein. The chain is Outer-membrane lipoprotein LolB from Shewanella sp. (strain MR-7).